We begin with the raw amino-acid sequence, 437 residues long: Major royal jelly protein 6 (437 aa).

A signal peptide spans 1–20; it reads MTNWLLLIVCLSIACQDVTS. N-linked (GlcNAc...) asparagine glycans are attached at residues Asn78, Asn164, Asn181, Asn201, and Asn324.

It belongs to the major royal jelly protein family. In terms of tissue distribution, found in and secreted from the hypopharyngeal glands of the worker honey bee (at protein level); expression peaks at 20 days post eclosion. Expressed in the spermatheca of adult queen bees (at protein level); Expression levels are higher in mated queens than in virgin queens. Expressed at low level in the brains of adult worker bees. Protein abundance does not seem to correlate with transcript abundance.

The protein resides in the secreted. Functionally, component of royal jelly, a substance produced in the hypopharyngeal gland containing proteins, free amino acids, fatty acids, sugars and other nutrients, which is fed to developing larvae by worker nurse bees. All larvae are fed some royal jelly (also known as worker jelly) early in their development but it forms the principal source of nutrition for larvae destined to become queen bees. Produced in the spermatheca of adult queen bees, along with other major royal jelly proteins, where it may act as a nutrient supply for sperm stored by mated queens, or be involved in energy metabolism. This Apis mellifera (Honeybee) protein is Major royal jelly protein 6.